The chain runs to 352 residues: Protein O-mannose kinase (352 aa).

Residues 1-16 are Cytoplasmic-facing; it reads MERKPSVCRKSGSWNC. A helical; Signal-anchor for type II membrane protein transmembrane segment spans residues 17–37; it reads LLVLFLLLLFTVVSVNFLLYM. The Lumenal segment spans residues 38–352; it reads YIDQMYAPSR…MAVAETREML (315 aa). The 271-residue stretch at 82–352 folds into the Protein kinase domain; the sequence is VRKLKLVGEG…MAVAETREML (271 aa).

The protein belongs to the protein kinase superfamily. Ser/Thr protein kinase family. STKL subfamily.

It localises to the endoplasmic reticulum membrane. It catalyses the reaction 3-O-[beta-D-GalNAc-(1-&gt;3)-beta-D-GlcNAc-(1-&gt;4)-alpha-D-Man]-L-Thr-[protein] + ATP = 3-O-[beta-D-GalNAc-(1-&gt;3)-beta-D-GlcNAc-(1-&gt;4)-(O-6-P-alpha-D-Man)]-Thr-[protein] + ADP + H(+). In terms of biological role, protein O-mannose kinase that specifically mediates phosphorylation at the 6-position of an O-mannose of the trisaccharide (N-acetylgalactosamine (GalNAc)-beta-1,3-N-acetylglucosamine (GlcNAc)-beta-1,4-mannose) to generate phosphorylated O-mannosyl trisaccharide (N-acetylgalactosamine-beta-1,3-N-acetylglucosamine-beta-1,4-(phosphate-6-)mannose). Phosphorylated O-mannosyl trisaccharide is a carbohydrate structure present in alpha-dystroglycan (dag1), which is required for binding laminin G-like domain-containing extracellular proteins with high affinity. Only shows kinase activity when the GalNAc-beta-3-GlcNAc-beta-terminus is linked to the 4-position of O-mannose, suggesting that this disaccharide serves as the substrate recognition motif. The polypeptide is Protein O-mannose kinase (pomk) (Xenopus laevis (African clawed frog)).